Here is a 277-residue protein sequence, read N- to C-terminus: Undecaprenyl-diphosphatase 1 (277 aa).

The next 8 membrane-spanning stretches (helical) occupy residues Met1–Ile21, Ala39–Tyr58, Phe85–Phe105, Phe113–Ile133, Met147–Leu167, Ser191–Ile211, Ala226–Val246, and Leu251–Ala271.

This sequence belongs to the UppP family.

It is found in the cell membrane. It carries out the reaction di-trans,octa-cis-undecaprenyl diphosphate + H2O = di-trans,octa-cis-undecaprenyl phosphate + phosphate + H(+). Catalyzes the dephosphorylation of undecaprenyl diphosphate (UPP). Confers resistance to bacitracin. This Shouchella clausii (strain KSM-K16) (Alkalihalobacillus clausii) protein is Undecaprenyl-diphosphatase 1.